The following is a 2635-amino-acid chain: Protein unc-79 homolog (2635 aa).

Phosphoserine is present on residues Ser-754 and Ser-758. 6 disordered regions span residues 907–929, 1538–1575, 1607–1678, 1693–1832, 1863–1909, and 1929–1950; these read GPEG…NCTE, IAQR…DARR, LIDL…SVLS, SKDF…FKIQ, LGEQ…TQYR, and LEHQ…IQPG. Low complexity predominate over residues 1666-1678; it reads SSPSVPSHPSVLS. Over residues 1699–1713 the composition is skewed to polar residues; that stretch reads KDSGNNQSAGNTDSA. A compositionally biased stretch (basic and acidic residues) spans 1761 to 1775; the sequence is LDDHPDPGTEGEKPG. 2 stretches are compositionally biased toward polar residues: residues 1897–1909 and 1929–1947; these read ETSS…TQYR and LEHQ…TEQI. The next 2 helical transmembrane spans lie at 2223–2243 and 2466–2486; these read LLSF…ELCG and VLHM…TVYC.

The protein belongs to the unc-79 family. NALCN complex consists of NALCN and auxiliary subunits, UNC79, UNC80 and NACL1. These auxiliary subunits are essential for the NALCN channel function. UNC80 bridges NALCN to UNC79.

The protein resides in the cell membrane. Functionally, auxiliary subunit of the NALCN sodium channel complex, a voltage-gated ion channel responsible for the resting Na(+) permeability that controls neuronal excitability. Activated by neuropeptides substance P, neurotensin, and extracellular calcium that regulates neuronal excitability by controlling the sizes of NALCN-dependent sodium-leak current. This chain is Protein unc-79 homolog (UNC79), found in Homo sapiens (Human).